The primary structure comprises 376 residues: Erythronate-4-phosphate dehydrogenase (376 aa).

2 residues coordinate substrate: serine 45 and threonine 67. Residues aspartate 147, 209–211, and aspartate 235 each bind NAD(+); that span reads ASR. Arginine 211 is a catalytic residue. Glutamate 240 is an active-site residue. Histidine 257 (proton donor) is an active-site residue. Glycine 260 is an NAD(+) binding site. Tyrosine 261 serves as a coordination point for substrate.

It belongs to the D-isomer specific 2-hydroxyacid dehydrogenase family. PdxB subfamily. Homodimer.

The protein localises to the cytoplasm. It catalyses the reaction 4-phospho-D-erythronate + NAD(+) = (R)-3-hydroxy-2-oxo-4-phosphooxybutanoate + NADH + H(+). The protein operates within cofactor biosynthesis; pyridoxine 5'-phosphate biosynthesis; pyridoxine 5'-phosphate from D-erythrose 4-phosphate: step 2/5. Its function is as follows. Catalyzes the oxidation of erythronate-4-phosphate to 3-hydroxy-2-oxo-4-phosphonooxybutanoate. This is Erythronate-4-phosphate dehydrogenase from Aeromonas hydrophila subsp. hydrophila (strain ATCC 7966 / DSM 30187 / BCRC 13018 / CCUG 14551 / JCM 1027 / KCTC 2358 / NCIMB 9240 / NCTC 8049).